We begin with the raw amino-acid sequence, 359 residues long: Protein trichome birefringence-like 42 (359 aa).

Residues 7–25 (LFLLLLIFLVDLSDYGVLA) traverse the membrane as a helical; Signal-anchor for type II membrane protein segment. The GDS motif signature appears at 110–112 (GDS). Positions 335–349 (DCSHWCLPGVPDAWN) match the DCXHWCLPGXXDXWN motif motif.

The protein belongs to the PC-esterase family. TBL subfamily.

Its subcellular location is the membrane. May act as a bridging protein that binds pectin and other cell wall polysaccharides. Probably involved in maintaining esterification of pectins. May be involved in the specific O-acetylation of cell wall polymers. The protein is Protein trichome birefringence-like 42 (TBL42) of Arabidopsis thaliana (Mouse-ear cress).